We begin with the raw amino-acid sequence, 411 residues long: Arginine deiminase (411 aa).

C399 functions as the Amidino-cysteine intermediate in the catalytic mechanism.

Belongs to the arginine deiminase family.

It localises to the cytoplasm. The catalysed reaction is L-arginine + H2O = L-citrulline + NH4(+). Its pathway is amino-acid degradation; L-arginine degradation via ADI pathway; carbamoyl phosphate from L-arginine: step 1/2. In Latilactobacillus sakei subsp. sakei (strain 23K) (Lactobacillus sakei subsp. sakei), this protein is Arginine deiminase.